The primary structure comprises 409 residues: uncharacterized protein (409 aa).

An N-terminal signal peptide occupies residues 1-39 (MVSDSKLELPLPVNQQKPRRRRILKVHLLIAALILSAVG). Zn(2+)-binding residues include His-67, Asp-69, Glu-181, His-250, and His-271.

This sequence belongs to the metallo-dependent hydrolases superfamily. Peptidase M19 family. As to quaternary structure, interacts with dil1. Zn(2+) is required as a cofactor.

It catalyses the reaction an L-aminoacyl-L-amino acid + H2O = 2 an L-alpha-amino acid. This is an uncharacterized protein from Schizosaccharomyces pombe (strain 972 / ATCC 24843) (Fission yeast).